The chain runs to 256 residues: 6-carboxyhexanoate--CoA ligase (256 aa).

The protein belongs to the BioW family. Homodimer. Mg(2+) serves as cofactor.

It carries out the reaction heptanedioate + ATP + CoA = 6-carboxyhexanoyl-CoA + AMP + diphosphate. Its pathway is metabolic intermediate metabolism; pimeloyl-CoA biosynthesis; pimeloyl-CoA from pimelate: step 1/1. Functionally, catalyzes the transformation of pimelate into pimeloyl-CoA with concomitant hydrolysis of ATP to AMP. This Bacillus amyloliquefaciens (strain ATCC 23350 / DSM 7 / BCRC 11601 / CCUG 28519 / NBRC 15535 / NRRL B-14393 / F) protein is 6-carboxyhexanoate--CoA ligase.